Consider the following 335-residue polypeptide: Phosphate acyltransferase (335 aa).

Belongs to the PlsX family. As to quaternary structure, homodimer. Probably interacts with PlsY.

Its subcellular location is the cytoplasm. It carries out the reaction a fatty acyl-[ACP] + phosphate = an acyl phosphate + holo-[ACP]. It participates in lipid metabolism; phospholipid metabolism. Catalyzes the reversible formation of acyl-phosphate (acyl-PO(4)) from acyl-[acyl-carrier-protein] (acyl-ACP). This enzyme utilizes acyl-ACP as fatty acyl donor, but not acyl-CoA. The polypeptide is Phosphate acyltransferase (Alkaliphilus oremlandii (strain OhILAs) (Clostridium oremlandii (strain OhILAs))).